The sequence spans 1025 residues: Error-prone DNA polymerase (1025 aa).

The protein belongs to the DNA polymerase type-C family. DnaE2 subfamily.

The protein localises to the cytoplasm. The catalysed reaction is DNA(n) + a 2'-deoxyribonucleoside 5'-triphosphate = DNA(n+1) + diphosphate. In terms of biological role, DNA polymerase involved in damage-induced mutagenesis and translesion synthesis (TLS). It is not the major replicative DNA polymerase. The protein is Error-prone DNA polymerase of Pseudomonas fluorescens (strain Pf0-1).